We begin with the raw amino-acid sequence, 137 residues long: Large ribosomal subunit protein uL16 (137 aa).

The protein belongs to the universal ribosomal protein uL16 family. Part of the 50S ribosomal subunit.

Functionally, binds 23S rRNA and is also seen to make contacts with the A and possibly P site tRNAs. The sequence is that of Large ribosomal subunit protein uL16 from Spiroplasma kunkelii.